An 86-amino-acid polypeptide reads, in one-letter code: Small ribosomal subunit protein bS20 (86 aa).

A compositionally biased stretch (basic residues) spans M1–A22. The tract at residues M1 to M28 is disordered.

The protein belongs to the bacterial ribosomal protein bS20 family.

Its function is as follows. Binds directly to 16S ribosomal RNA. This is Small ribosomal subunit protein bS20 from Serratia proteamaculans (strain 568).